A 549-amino-acid chain; its full sequence is O-fucosyltransferase 29 (549 aa).

A helical; Signal-anchor for type II membrane protein transmembrane segment spans residues 43-63; sequence TVMWTWVCGFMLFSLGVISLF. N152 carries an N-linked (GlcNAc...) asparagine glycan. 292-294 contacts substrate; sequence HLR. 2 N-linked (GlcNAc...) asparagine glycosylation sites follow: N359 and N527. Residues 506–549 form a disordered region; sequence PFSYDKTSTDDEEEDMSEENHNSTSPGHVHLSSADNERDEVFPD. Residues 540-549 are compositionally biased toward basic and acidic residues; that stretch reads DNERDEVFPD.

This sequence belongs to the glycosyltransferase GT106 family.

It is found in the membrane. It participates in glycan metabolism. The protein is O-fucosyltransferase 29 of Arabidopsis thaliana (Mouse-ear cress).